The primary structure comprises 374 residues: Patatin-2-Kuras 4 (374 aa).

An N-terminal signal peptide occupies residues 1–11 (MILATTSSTCA). The PNPLA domain occupies 20 to 217 (LSIDGGGIKG…TVGDPALLSL (198 aa)). Residues 24–29 (GGGIKG) carry the GXGXXG motif. The GXSXG motif lies at 63 to 67 (GTSTG). Residue S65 is the Nucleophile of the active site. N-linked (GlcNAc...) asparagine glycosylation is present at N103. The active-site Proton acceptor is the D203. Residues 203–205 (DGG) carry the DGA/G motif. A coiled-coil region spans residues 309 to 372 (ENALTGTTTE…DRKKLRANKA (64 aa)).

The protein belongs to the patatin family.

The protein resides in the vacuole. Its function is as follows. Probable lipolytic acyl hydrolase (LAH), an activity which is thought to be involved in the response of tubers to pathogens. This is Patatin-2-Kuras 4 (pat2-k4) from Solanum tuberosum (Potato).